Here is a 487-residue protein sequence, read N- to C-terminus: RCC1 repeat-containing protein DDB_G0284033 (487 aa).

5 RCC1 repeats span residues 66–127 (SNKV…FSGY), 207–259 (RSLI…ALSN), 260–313 (DGKL…ALTS), 373–426 (NGNI…IVET), and 428–483 (DGRF…SLNS).

This chain is RCC1 repeat-containing protein DDB_G0284033, found in Dictyostelium discoideum (Social amoeba).